The chain runs to 276 residues: D-apionate oxidoisomerase (276 aa).

NAD(+) contacts are provided by residues 12–14 (GKM), Glu-33, and Asp-69. Zn(2+) is bound by residues His-114 and Glu-184.

The protein belongs to the ApnO family. Zn(2+) serves as cofactor.

The catalysed reaction is D-apionate + NAD(+) = 3-oxoisoapionate + NADH + H(+). It functions in the pathway carbohydrate metabolism. Its function is as follows. Involved in catabolism of D-apiose. Catalyzes the conversion of D-apionate to 3-oxo-isoapionate. The chain is D-apionate oxidoisomerase from Cupriavidus necator (strain ATCC 43291 / DSM 13513 / CCUG 52238 / LMG 8453 / N-1) (Ralstonia eutropha).